Consider the following 391-residue polypeptide: Heme A synthase (391 aa).

8 helical membrane-spanning segments follow: residues 37-57 (IRLW…VGGL), 121-141 (RQLG…FLAA), 152-172 (LLAL…MVAS), 186-206 (LATH…QALL), 229-249 (TTVL…VAGI), 298-318 (FLHR…WIFG), 332-352 (LLAM…LSAA), and 354-374 (WQVA…ILHA). His300 lines the heme pocket. His360 serves as a coordination point for heme.

It belongs to the COX15/CtaA family. Type 2 subfamily. In terms of assembly, interacts with CtaB. The cofactor is heme b.

The protein localises to the cell membrane. It carries out the reaction Fe(II)-heme o + 2 A + H2O = Fe(II)-heme a + 2 AH2. The protein operates within porphyrin-containing compound metabolism; heme A biosynthesis; heme A from heme O: step 1/1. Catalyzes the conversion of heme O to heme A by two successive hydroxylations of the methyl group at C8. The first hydroxylation forms heme I, the second hydroxylation results in an unstable dihydroxymethyl group, which spontaneously dehydrates, resulting in the formyl group of heme A. The sequence is that of Heme A synthase from Cereibacter sphaeroides (strain ATCC 17029 / ATH 2.4.9) (Rhodobacter sphaeroides).